The chain runs to 555 residues: uncharacterized protein (555 aa).

A run of 5 helical transmembrane segments spans residues 13–30, 35–57, 72–91, 98–120, and 157–179; these read ALQAVVVLSLISAIGLGL, FWGVSLGVTFVFFAGILAGHFGL, LVIFVYSLGLQVGPGFFSSF, LNMLALAVVLLGTLLTVVASYAT, and TPALGCAVAYPMGVIGVILAVLL. 2 consecutive RCK C-terminal domains span residues 188-273 and 282-366; these read EDLE…LFGE and KEDI…VLGN. Helical transmembrane passes span 376-398, 408-430, 437-459, 469-491, 498-517, and 532-554; these read LVVIFIGIVLGLALGAIPFSIPG, AGGPIIVGILLGTFGPRIHMITY, LMLRALGLSMYLACLGLDAGAHF, LLWIALGAGLTIIPTVLVGFVAF, FGSVSGMLCGSMANPMALNY, and ATVYPLCMFLRVIIAQVLLMFLL.

Belongs to the AAE transporter (TC 2.A.81) family.

Its subcellular location is the cell membrane. This is an uncharacterized protein from Bacteroides thetaiotaomicron (strain ATCC 29148 / DSM 2079 / JCM 5827 / CCUG 10774 / NCTC 10582 / VPI-5482 / E50).